The following is a 299-amino-acid chain: MKVLWAVLVVTLLAGCRADAEPELEAQEPAVWQSGQPWELALGRLWDYLRWVQTLSDQVQEELLSSQVTQELTLLMEDTMKEVKAYKAELEQELAPMAEDTRARLSKELQAAQARLGADMEEVRNRLAQYRGEVQAMLGQSAEELRARLASHLRKMRKRLLRDAEDLQKRLAVYKAGAREGAERGVSAIRERLASLVEQGRLRSALTSQPLRERAQAWGERLRGRLEEVGGQARDRLDVVREQMEEVRAKVEEQAEAFQARLKGWFEPMVEDMRRQWADLIEKVQVAVGASTPAPSQKP.

The first 18 residues, 1-18, serve as a signal peptide directing secretion; sequence MKVLWAVLVVTLLAGCRA. Repeat copies occupy residues 74–95, 96–117, 118–139, 140–161, 162–183, 184–205, and 224–245. Residues 74-245 form an 8 X 22 AA approximate tandem repeats region; the sequence is LLMEDTMKEV…RLDVVREQME (172 aa). Position 137 is a methionine sulfoxide (Met137). Residue Ser141 is modified to Phosphoserine. The interval 152 to 162 is LDL and other lipoprotein receptors binding; it reads HLRKMRKRLLR. Heparin is bound at residue 156 to 159; sequence MRKR. A lipid-binding and lipoprotein association region spans residues 204 to 273; the sequence is SALTSQPLRE…GWFEPMVEDM (70 aa). 219-226 provides a ligand contact to heparin; sequence GERLRGRL. The specificity for association with VLDL stretch occupies residues 261-273; it reads RLKGWFEPMVEDM.

This sequence belongs to the apolipoprotein A1/A4/E family. In terms of assembly, homotetramer. May interact with ABCA1; functionally associated with ABCA1 in the biogenesis of HDLs. May interact with APP/A4 amyloid-beta peptide; the interaction is extremely stable in vitro but its physiological significance is unclear. May interact with MAPT. May interact with MAP2. In the cerebrospinal fluid, interacts with secreted SORL1. Interacts with PMEL; this allows the loading of PMEL luminal fragment on ILVs to induce fibril nucleation. Post-translationally, APOE exists as multiple glycosylated and sialylated glycoforms within cells and in plasma. The extent of glycosylation and sialylation are tissue and context specific. Glycated in plasma VLDL. In terms of processing, phosphorylated by FAM20C in the extracellular medium.

The protein resides in the secreted. It localises to the extracellular space. Its subcellular location is the extracellular matrix. It is found in the extracellular vesicle. The protein localises to the endosome. The protein resides in the multivesicular body. Functionally, APOE is an apolipoprotein, a protein associating with lipid particles, that mainly functions in lipoprotein-mediated lipid transport between organs via the plasma and interstitial fluids. APOE is a core component of plasma lipoproteins and is involved in their production, conversion and clearance. Apolipoproteins are amphipathic molecules that interact both with lipids of the lipoprotein particle core and the aqueous environment of the plasma. As such, APOE associates with chylomicrons, chylomicron remnants, very low density lipoproteins (VLDL) and intermediate density lipoproteins (IDL) but shows a preferential binding to high-density lipoproteins (HDL). It also binds a wide range of cellular receptors including the LDL receptor/LDLR, the LDL receptor-related proteins LRP1, LRP2 and LRP8 and the very low-density lipoprotein receptor/VLDLR that mediate the cellular uptake of the APOE-containing lipoprotein particles. Finally, APOE also has a heparin-binding activity and binds heparan-sulfate proteoglycans on the surface of cells, a property that supports the capture and the receptor-mediated uptake of APOE-containing lipoproteins by cells. A main function of APOE is to mediate lipoprotein clearance through the uptake of chylomicrons, VLDLs, and HDLs by hepatocytes. APOE is also involved in the biosynthesis by the liver of VLDLs as well as their uptake by peripheral tissues ensuring the delivery of triglycerides and energy storage in muscle, heart and adipose tissues. By participating in the lipoprotein-mediated distribution of lipids among tissues, APOE plays a critical role in plasma and tissues lipid homeostasis. APOE is also involved in two steps of reverse cholesterol transport, the HDLs-mediated transport of cholesterol from peripheral tissues to the liver, and thereby plays an important role in cholesterol homeostasis. First, it is functionally associated with ABCA1 in the biogenesis of HDLs in tissues. Second, it is enriched in circulating HDLs and mediates their uptake by hepatocytes. APOE also plays an important role in lipid transport in the central nervous system, regulating neuron survival and sprouting. This chain is Apolipoprotein E (APOE), found in Erethizon dorsatum (North American porcupine).